Consider the following 1197-residue polypeptide: DNA-directed RNA polymerase subunit beta (1197 aa).

Over residues 1172 to 1185 the composition is skewed to basic and acidic residues; the sequence is KEQEEKKAQQEAEK. The interval 1172–1197 is disordered; that stretch reads KEQEEKKAQQEAEKAQAASAEDPSAE. The segment covering 1186–1197 has biased composition (low complexity); sequence AQAASAEDPSAE.

Belongs to the RNA polymerase beta chain family. In terms of assembly, the RNAP catalytic core consists of 2 alpha, 1 beta, 1 beta' and 1 omega subunit. When a sigma factor is associated with the core the holoenzyme is formed, which can initiate transcription.

The catalysed reaction is RNA(n) + a ribonucleoside 5'-triphosphate = RNA(n+1) + diphosphate. Its function is as follows. DNA-dependent RNA polymerase catalyzes the transcription of DNA into RNA using the four ribonucleoside triphosphates as substrates. The protein is DNA-directed RNA polymerase subunit beta of Latilactobacillus sakei subsp. sakei (strain 23K) (Lactobacillus sakei subsp. sakei).